A 203-amino-acid chain; its full sequence is Glycerol-3-phosphate acyltransferase (203 aa).

A run of 5 helical transmembrane segments spans residues 4–24 (IAYL…AVIF), 56–76 (LGVL…GFYL), 80–100 (ISVI…PVFF), 115–135 (IIPM…FVFL), and 149–169 (LIVP…VALV).

It belongs to the PlsY family. Probably interacts with PlsX.

Its subcellular location is the cell inner membrane. It catalyses the reaction an acyl phosphate + sn-glycerol 3-phosphate = a 1-acyl-sn-glycero-3-phosphate + phosphate. It functions in the pathway lipid metabolism; phospholipid metabolism. Functionally, catalyzes the transfer of an acyl group from acyl-phosphate (acyl-PO(4)) to glycerol-3-phosphate (G3P) to form lysophosphatidic acid (LPA). This enzyme utilizes acyl-phosphate as fatty acyl donor, but not acyl-CoA or acyl-ACP. The polypeptide is Glycerol-3-phosphate acyltransferase (Glaesserella parasuis serovar 5 (strain SH0165) (Haemophilus parasuis)).